Here is a 391-residue protein sequence, read N- to C-terminus: Chalcone synthase 2 (391 aa).

Cys164 is an active-site residue.

The protein belongs to the thiolase-like superfamily. Chalcone/stilbene synthases family.

The enzyme catalyses (E)-4-coumaroyl-CoA + 3 malonyl-CoA + 3 H(+) = 2',4,4',6'-tetrahydroxychalcone + 3 CO2 + 4 CoA. It functions in the pathway secondary metabolite biosynthesis; flavonoid biosynthesis. Functionally, the primary product of this enzyme is 4,2',4',6'-tetrahydroxychalcone (also termed naringenin-chalcone or chalcone) which can under specific conditions spontaneously isomerize into naringenin. The protein is Chalcone synthase 2 (CHS2) of Citrus sinensis (Sweet orange).